Reading from the N-terminus, the 447-residue chain is Argininosuccinate synthase (447 aa).

Residues 17-25 (AFSGGLDTS) and Ala43 each bind ATP. Tyr99 provides a ligand contact to L-citrulline. 2 residues coordinate ATP: Gly129 and Thr131. L-aspartate-binding residues include Thr131, Asn135, and Asp136. Residue Asn135 coordinates L-citrulline. Position 136 (Asp136) interacts with ATP. L-citrulline is bound by residues Arg139 and Ser192. Residue Asp194 coordinates ATP. Thr201, Glu203, and Glu280 together coordinate L-citrulline.

The protein belongs to the argininosuccinate synthase family. Type 2 subfamily. In terms of assembly, homotetramer.

The protein localises to the cytoplasm. It carries out the reaction L-citrulline + L-aspartate + ATP = 2-(N(omega)-L-arginino)succinate + AMP + diphosphate + H(+). The protein operates within amino-acid biosynthesis; L-arginine biosynthesis; L-arginine from L-ornithine and carbamoyl phosphate: step 2/3. This chain is Argininosuccinate synthase, found in Escherichia fergusonii (strain ATCC 35469 / DSM 13698 / CCUG 18766 / IAM 14443 / JCM 21226 / LMG 7866 / NBRC 102419 / NCTC 12128 / CDC 0568-73).